The chain runs to 412 residues: 4-hydroxy-3-methylbut-2-en-1-yl diphosphate synthase (ferredoxin) (412 aa).

A compositionally biased stretch (polar residues) spans 1-12 (MQTLDRPNAPSQ). The tract at residues 1 to 22 (MQTLDRPNAPSQQPYPEPVYPR) is disordered. Cys-314, Cys-317, Cys-348, and Glu-355 together coordinate [4Fe-4S] cluster.

It belongs to the IspG family. It depends on [4Fe-4S] cluster as a cofactor.

It carries out the reaction (2E)-4-hydroxy-3-methylbut-2-enyl diphosphate + 2 oxidized [2Fe-2S]-[ferredoxin] + H2O = 2-C-methyl-D-erythritol 2,4-cyclic diphosphate + 2 reduced [2Fe-2S]-[ferredoxin] + H(+). Its pathway is isoprenoid biosynthesis; isopentenyl diphosphate biosynthesis via DXP pathway; isopentenyl diphosphate from 1-deoxy-D-xylulose 5-phosphate: step 5/6. Functionally, converts 2C-methyl-D-erythritol 2,4-cyclodiphosphate (ME-2,4cPP) into 1-hydroxy-2-methyl-2-(E)-butenyl 4-diphosphate. The polypeptide is 4-hydroxy-3-methylbut-2-en-1-yl diphosphate synthase (ferredoxin) (Synechococcus sp. (strain JA-3-3Ab) (Cyanobacteria bacterium Yellowstone A-Prime)).